A 143-amino-acid polypeptide reads, in one-letter code: Universal stress protein A (143 aa).

The protein belongs to the universal stress protein A family. Homodimer.

The protein localises to the cytoplasm. Required for resistance to DNA-damaging agents. The protein is Universal stress protein A (uspA) of Photorhabdus laumondii subsp. laumondii (strain DSM 15139 / CIP 105565 / TT01) (Photorhabdus luminescens subsp. laumondii).